Here is a 211-residue protein sequence, read N- to C-terminus: GATA transcription factor 19 (211 aa).

Residues 77–102 (CANCDTTSTPLWRNGPRGPKSLCNAC) form a GATA-type zinc finger. Residues 111-131 (RRASTARNSTSGGGSTAAGVP) are disordered.

Belongs to the type IV zinc-finger family. Class B subfamily. Forms heterodimers with GATA18.

It localises to the nucleus. In terms of biological role, transcriptional regulator that specifically binds 5'-GATA-3' or 5'-GAT-3' motifs within gene promoters. Regulates both flower and shoot apical meristem (SAM) development, especially for establishing organ boundaries in shoots and flowers, probably by controlling the number and position of WUS-expressing cells. The chain is GATA transcription factor 19 from Arabidopsis thaliana (Mouse-ear cress).